We begin with the raw amino-acid sequence, 137 residues long: Large ribosomal subunit protein uL16c (137 aa).

The protein belongs to the universal ribosomal protein uL16 family. As to quaternary structure, part of the 50S ribosomal subunit.

Its subcellular location is the plastid. The protein localises to the chloroplast. The sequence is that of Large ribosomal subunit protein uL16c from Hordeum vulgare (Barley).